Consider the following 677-residue polypeptide: Platelet glycoprotein Ib alpha chain (677 aa).

A signal peptide spans 1–16 (MHLLLWLLLLARLCRP). The region spanning 17–47 (EFICEVSKVTSQVEVNCDNKGLKALPPGLPG) is the LRRNT domain. Topologically, residues 17–564 (EFICEVSKVT…NPDLCCLLPL (548 aa)) are extracellular. A disulfide bond links C20 and C33. LRR repeat units follow at residues 72 to 93 (RLAQ…GMLP), 94 to 115 (RLET…GRAL), 117 to 138 (ALTT…TLDG), 141 to 162 (HLHE…LLAP), 165 to 186 (QLRK…FLEG), and 189 to 210 (ELDT…FFGD). Residues 221–282 (NPWSCDCEIL…HTYQGKDCPS (62 aa)) enclose the LRRCT domain. Disulfide bonds link C225–C264 and C227–C280. Sulfotyrosine is present on residues Y291 and Y294. 11 O-linked (GalNAc...) threonine glycosylation sites follow: T309, T319, T323, T324, T346, T354, T368, T372, T376, T377, and T399. Positions 359 to 499 (TLGPIMPTTT…EPTTTPTSPT (141 aa)) are disordered. 4 stretches are compositionally biased toward low complexity: residues 362-385 (PIMP…TTPT), 393-403 (PTTLEPTTTPI), 411-421 (PTTLEPTTTPI), and 427-470 (TPST…TPTI). Residues 471-485 (PELPTPPTTPEPTMP) show a composition bias toward pro residues. Residues 486 to 499 (PTTLEPTTTPTSPT) are compositionally biased toward low complexity. T487 is a glycosylation site (O-linked (GalNAc...) threonine). S497 carries an O-linked (GalNAc...) serine glycan. T500 carries an O-linked (GalNAc...) threonine glycan. O-linked (GalNAc...) serine glycosylation is present at S523. A helical membrane pass occupies residues 565–585 (GFYILGLLWLLFASVVLILLL). The Cytoplasmic portion of the chain corresponds to 586 to 677 (TWAQHVKPQA…VGVRYSSHSL (92 aa)). Residues S654 and S657 each carry the phosphoserine modification.

Two GP-Ib beta are disulfide-linked to one GP-Ib alpha. GP-IX is complexed with the GP-Ib heterodimer via a non covalent linkage. Interacts with FLNB. Interacts with FLNA (via filamin repeats 4, 9, 12, 17, 19, 21, and 23). In terms of processing, O-glycosylated. Post-translationally, glycocalicin is the product of a proteolytic cleavage/shedding, catalyzed by ADAM17, which releases most of the extracellular domain. Binding sites for vWF and thrombin are in this part of the protein.

It is found in the membrane. Its function is as follows. GP-Ib, a surface membrane protein of platelets, participates in the formation of platelet plugs by binding to the A1 domain of vWF, which is already bound to the subendothelium. In Canis lupus familiaris (Dog), this protein is Platelet glycoprotein Ib alpha chain (GP1BA).